The sequence spans 179 residues: Cytochrome b6-f complex iron-sulfur subunit (179 aa).

The helical transmembrane segment at Leu-21–Ile-43 threads the bilayer. The 102-residue stretch at Gly-61 to Phe-162 folds into the Rieske domain. Positions 108, 110, 126, and 129 each coordinate [2Fe-2S] cluster. Cys-113 and Cys-128 are oxidised to a cystine.

It belongs to the Rieske iron-sulfur protein family. In terms of assembly, the 4 large subunits of the cytochrome b6-f complex are cytochrome b6, subunit IV (17 kDa polypeptide, PetD), cytochrome f and the Rieske protein, while the 4 small subunits are PetG, PetL, PetM and PetN. The complex functions as a dimer. It depends on [2Fe-2S] cluster as a cofactor.

The protein localises to the cellular thylakoid membrane. The enzyme catalyses 2 oxidized [plastocyanin] + a plastoquinol + 2 H(+)(in) = 2 reduced [plastocyanin] + a plastoquinone + 4 H(+)(out). Functionally, component of the cytochrome b6-f complex, which mediates electron transfer between photosystem II (PSII) and photosystem I (PSI), cyclic electron flow around PSI, and state transitions. This Cyanothece sp. (strain PCC 7425 / ATCC 29141) protein is Cytochrome b6-f complex iron-sulfur subunit.